We begin with the raw amino-acid sequence, 113 residues long: MASFSLSILVFFISALVLVPQGFAEYYLNPAYRPPQTKPPVNKPSHKEPPVHKPPHKEPPVNKPRHKEPPVHKPPHKDPPVNKPPQKESPVHKPPRKEPPTHKHPPAEDNIHF.

The first 24 residues, Met-1–Ala-24, serve as a signal peptide directing secretion. The segment at Asn-29–Phe-113 is disordered. A compositionally biased stretch (pro residues) spans Tyr-32–Asn-42. A run of 2 repeats spans residues Pro-34–Lys-38 and Pro-39–Lys-43. The segment at Pro-34–Asp-109 is 15 X 5 AA approximate tandem repeats of P-P-[QVHRTA]-[NHKE]-[KEDT]. The 3; approximate repeat unit spans residues Pro-44–Glu-48. Basic and acidic residues-rich tracts occupy residues Ser-45 to Pro-60 and Lys-67 to Phe-113. Tandem repeats lie at residues Pro-49–Lys-53, Pro-54–Glu-58, and Pro-59–Lys-63. A 7; approximate repeat occupies Pro-64–Glu-68. Repeat copies occupy residues Pro-69–Lys-73, Pro-74–Asp-78, Pro-79–Lys-83, and Pro-84–Glu-88. One copy of the 12; approximate repeat lies at Ser-89–Lys-93. 3 tandem repeats follow at residues Pro-94 to Glu-98, Pro-99 to Lys-103, and Pro-105 to Asp-109.

The protein belongs to the plant proline-rich protein superfamily. ENOD12 family. Expressed only in young nodules.

Its subcellular location is the secreted. It is found in the cell wall. In terms of biological role, involved in the infection process during the plant-rhizobium interaction. The chain is Early nodulin-12B (ENOD12B) from Medicago sativa (Alfalfa).